Consider the following 712-residue polypeptide: Cyclolysin secretion/processing ATP-binding protein CyaB (712 aa).

The region spanning 7 to 128 (QCASVPDSGL…ALWAGELLLC (122 aa)) is the Peptidase C39 domain. Residues 157–439 (IGEVLLISLV…LAQLWNDFQQ (283 aa)) form the ABC transmembrane type-1 domain. 6 helical membrane passes run 160–180 (VLLI…FFQV), 194–214 (LNVI…LTGI), 272–292 (AVTV…MFFY), 298–318 (LVVL…TPVL), 367–387 (VAAG…VTLI), and 390–410 (LVAL…RMTV). Positions 471-706 (IELDRVSFRY…GGLYARLQAL (236 aa)) constitute an ABC transporter domain. 505–512 (GRSGSGKS) is a binding site for ATP.

This sequence belongs to the ABC transporter superfamily. Cyclolysin exporter (TC 3.A.1.109.2) family.

Its subcellular location is the cell membrane. Involved in the export of calmodulin-sensitive adenylate cyclase-hemolysin (cyclolysin). This Bordetella pertussis (strain Tohama I / ATCC BAA-589 / NCTC 13251) protein is Cyclolysin secretion/processing ATP-binding protein CyaB (cyaB).